Here is a 254-residue protein sequence, read N- to C-terminus: NH(3)-dependent NAD(+) synthetase (254 aa).

Gly-32–Ser-39 is a binding site for ATP. A Mg(2+)-binding site is contributed by Asp-38. Arg-113 contributes to the deamido-NAD(+) binding site. ATP is bound at residue Thr-133. Mg(2+) is bound at residue Glu-138. Residues Lys-146 and Asp-153 each coordinate deamido-NAD(+). 2 residues coordinate ATP: Lys-162 and Ser-184. Residue His-244–Lys-245 participates in deamido-NAD(+) binding.

This sequence belongs to the NAD synthetase family. In terms of assembly, homodimer.

The catalysed reaction is deamido-NAD(+) + NH4(+) + ATP = AMP + diphosphate + NAD(+) + H(+). The protein operates within cofactor biosynthesis; NAD(+) biosynthesis; NAD(+) from deamido-NAD(+) (ammonia route): step 1/1. Functionally, catalyzes the ATP-dependent amidation of deamido-NAD to form NAD. Uses ammonia as a nitrogen source. This chain is NH(3)-dependent NAD(+) synthetase, found in Thermococcus sibiricus (strain DSM 12597 / MM 739).